The chain runs to 226 residues: Large ribosomal subunit protein uL1 (226 aa).

The protein belongs to the universal ribosomal protein uL1 family. Part of the 50S ribosomal subunit.

Functionally, binds directly to 23S rRNA. The L1 stalk is quite mobile in the ribosome, and is involved in E site tRNA release. In terms of biological role, protein L1 is also a translational repressor protein, it controls the translation of the L11 operon by binding to its mRNA. The sequence is that of Large ribosomal subunit protein uL1 from Borreliella burgdorferi (strain ATCC 35210 / DSM 4680 / CIP 102532 / B31) (Borrelia burgdorferi).